We begin with the raw amino-acid sequence, 421 residues long: Gamma-glutamyl phosphate reductase (421 aa).

It belongs to the gamma-glutamyl phosphate reductase family.

It localises to the cytoplasm. It catalyses the reaction L-glutamate 5-semialdehyde + phosphate + NADP(+) = L-glutamyl 5-phosphate + NADPH + H(+). It participates in amino-acid biosynthesis; L-proline biosynthesis; L-glutamate 5-semialdehyde from L-glutamate: step 2/2. In terms of biological role, catalyzes the NADPH-dependent reduction of L-glutamate 5-phosphate into L-glutamate 5-semialdehyde and phosphate. The product spontaneously undergoes cyclization to form 1-pyrroline-5-carboxylate. This chain is Gamma-glutamyl phosphate reductase, found in Pseudomonas savastanoi pv. phaseolicola (strain 1448A / Race 6) (Pseudomonas syringae pv. phaseolicola (strain 1448A / Race 6)).